An 83-amino-acid chain; its full sequence is U5-theraphotoxin-Hs1a 3 (83 aa).

Residues 1–21 form the signal peptide; the sequence is MKTSMFLTLTGLVLLFVVCYA. The propeptide occupies 22–49; that stretch reads SESEEKDFPKELLSSIFAADSDFKVEER. Disulfide bonds link Cys-51–Cys-63, Cys-56–Cys-68, and Cys-62–Cys-75.

Belongs to the neurotoxin 10 (Hwtx-1) family. 51 (Hntx-8) subfamily. Hntx-8 sub-subfamily. Expressed by the venom gland.

The protein localises to the secreted. Its function is as follows. Agglutinates erythrocytes. The sequence is that of U5-theraphotoxin-Hs1a 3 from Cyriopagopus schmidti (Chinese bird spider).